Here is a 95-residue protein sequence, read N- to C-terminus: Citrate lyase acyl carrier protein (95 aa).

Serine 14 bears the O-(phosphoribosyl dephospho-coenzyme A)serine mark.

Belongs to the CitD family. In terms of assembly, oligomer with a subunit composition of (alpha,beta,gamma)6.

It localises to the cytoplasm. Covalent carrier of the coenzyme of citrate lyase. This chain is Citrate lyase acyl carrier protein, found in Haemophilus influenzae (strain PittGG).